An 82-amino-acid polypeptide reads, in one-letter code: MPNIKSAIKRVKVNEKANIANSQAKSAMRTTVKKAENAVAENAENKQELLQAAFKSLDKAASKGLIHKNAAARKKSRLAKKA.

It belongs to the bacterial ribosomal protein bS20 family.

Functionally, binds directly to 16S ribosomal RNA. The sequence is that of Small ribosomal subunit protein bS20 from Lysinibacillus sphaericus (strain C3-41).